Reading from the N-terminus, the 496-residue chain is 2,3-bisphosphoglycerate-independent phosphoglycerate mutase (496 aa).

Residues Asp-12 and Ser-62 each coordinate Mn(2+). The active-site Phosphoserine intermediate is Ser-62. Substrate contacts are provided by residues His-121, 150 to 151 (RD), Arg-181, Arg-187, 252 to 255 (RNDR), and Lys-317. 5 residues coordinate Mn(2+): Asp-384, His-388, Asp-425, His-426, and His-444.

This sequence belongs to the BPG-independent phosphoglycerate mutase family. As to quaternary structure, monomer. It depends on Mn(2+) as a cofactor.

It catalyses the reaction (2R)-2-phosphoglycerate = (2R)-3-phosphoglycerate. The protein operates within carbohydrate degradation; glycolysis; pyruvate from D-glyceraldehyde 3-phosphate: step 3/5. Its function is as follows. Catalyzes the interconversion of 2-phosphoglycerate and 3-phosphoglycerate. The polypeptide is 2,3-bisphosphoglycerate-independent phosphoglycerate mutase (Anaplasma phagocytophilum (strain HZ)).